The primary structure comprises 320 residues: Aminoacyl tRNA synthase complex-interacting multifunctional protein 2 (320 aa).

At S36 the chain carries Phosphoserine. The interaction with PRKN stretch occupies residues 82-162 (TPDADLDVTN…HTHSAVRSVP (81 aa)). Residues 162–225 (PANLLQCFGE…FLFSLFGQKQ (64 aa)) form an interaction with TP53 region. The GST C-terminal domain occupies 220-317 (LFGQKQDAVN…NLAPFHTALK (98 aa)).

As to quaternary structure, part of the multisynthetase complex (MSC), a multisubunit complex that groups tRNA ligases for Arg (RARS1), Asp (DARS1), Gln (QARS1), Ile (IARS1), Leu (LARS1), Lys (KARS1), Met (MARS1) the bifunctional ligase for Glu and Pro (EPRS1) and the auxiliary subunits AIMP1/p43, AIMP2/p38 and EEF1E1/p18. Interacts (via N-terminus) with KARS1. Interacts with EPRS1. Forms a linear complex that contains MARS1, EEF1E1, EPRS1 and AIMP2 that is at the core of the multisubunit complex. Binds FUBP1 (via C-terminus). Interacts in both its unphosphorylated and phosphorylated forms with p53/TP53 (via N-terminus) in the nucleus following UV irradiation. Interacts (via N-terminus) with PRKN/parkin (via first RING-type domain). Interacts with TARS3. Phosphorylated on serine residues in response to UV irradiation. In terms of processing, ubiquitinated by PRKN, leading to its degradation by the proteasome.

The protein localises to the cytoplasm. It localises to the cytosol. It is found in the nucleus. Required for assembly and stability of the aminoacyl-tRNA synthase complex. Mediates ubiquitination and degradation of FUBP1, a transcriptional activator of MYC, leading to MYC down-regulation which is required for aveolar type II cell differentiation. Blocks MDM2-mediated ubiquitination and degradation of p53/TP53. Functions as a proapoptotic factor. The protein is Aminoacyl tRNA synthase complex-interacting multifunctional protein 2 (AIMP2) of Bos taurus (Bovine).